The sequence spans 118 residues: MSDLDEIRRKRMAELEARQAAAQGQMQQQAQQQMQQQEAQRQFEEQKKALIAQILTTEARSRLANLKLTKPELVNQIEIQLIQSAQAGSLRGKVTDEQLKVLLRQIAGQKREIKITRK.

The segment at 16–39 (EARQAAAQGQMQQQAQQQMQQQEA) is disordered. Low complexity predominate over residues 18–39 (RQAAAQGQMQQQAQQQMQQQEA).

The protein belongs to the PDCD5 family.

The protein is DNA-binding protein Msm_0708 of Methanobrevibacter smithii (strain ATCC 35061 / DSM 861 / OCM 144 / PS).